The following is a 169-amino-acid chain: Der GTPase-activating protein YihI (169 aa).

2 disordered regions span residues 1-99 (MKPS…QAEL) and 146-169 (SYDDDEEEEEDEKQEDMMRLLRGN). Residues 10–19 (SKGHAKARRK) are compositionally biased toward basic residues. Residues 20 to 30 (TREELDQEARD) are compositionally biased toward basic and acidic residues. Positions 31–40 (RKRQKKRRGH) are enriched in basic residues. Residues 49–58 (GNTTSGSKGQ) are compositionally biased toward polar residues. Residues 147-159 (YDDDEEEEEDEKQ) are compositionally biased toward acidic residues. The span at 160–169 (EDMMRLLRGN) shows a compositional bias: basic and acidic residues.

The protein belongs to the YihI family. In terms of assembly, interacts with Der.

A GTPase-activating protein (GAP) that modifies Der/EngA GTPase function. May play a role in ribosome biogenesis. This chain is Der GTPase-activating protein YihI, found in Escherichia coli O81 (strain ED1a).